The primary structure comprises 143 residues: Hemoglobin subunit alpha (143 aa).

Serine 2 bears the N-acetylserine mark. The Globin domain maps to 2-143; it reads SLSDKDKSAV…VALALAEKYR (142 aa). Residue histidine 60 coordinates O2. Histidine 89 provides a ligand contact to heme b.

The protein belongs to the globin family. As to quaternary structure, heterotetramer of two alpha chains and two beta chains. In terms of tissue distribution, red blood cells.

In terms of biological role, involved in oxygen transport from gills to the various peripheral tissues. The polypeptide is Hemoglobin subunit alpha (hba) (Pogonophryne scotti (Saddleback plunderfish)).